Reading from the N-terminus, the 159-residue chain is NAD(P)H-quinone oxidoreductase subunit J, chloroplastic (159 aa).

This sequence belongs to the complex I 30 kDa subunit family. NDH is composed of at least 16 different subunits, 5 of which are encoded in the nucleus.

The protein resides in the plastid. It is found in the chloroplast thylakoid membrane. The enzyme catalyses a plastoquinone + NADH + (n+1) H(+)(in) = a plastoquinol + NAD(+) + n H(+)(out). The catalysed reaction is a plastoquinone + NADPH + (n+1) H(+)(in) = a plastoquinol + NADP(+) + n H(+)(out). NDH shuttles electrons from NAD(P)H:plastoquinone, via FMN and iron-sulfur (Fe-S) centers, to quinones in the photosynthetic chain and possibly in a chloroplast respiratory chain. The immediate electron acceptor for the enzyme in this species is believed to be plastoquinone. Couples the redox reaction to proton translocation, and thus conserves the redox energy in a proton gradient. This chain is NAD(P)H-quinone oxidoreductase subunit J, chloroplastic, found in Oryza nivara (Indian wild rice).